The following is a 917-amino-acid chain: MSQDRIAGIDVATNSTDISNIINEMIICIKGKQMPEVHEKAMDHLSKMIAANSRVIRDSNMLTERECVQKIMKLLSARNKKEEGKTVSDHFNELYRKLTLTKCDPHMRHSLMTHLLTMTDNSDAEKAVASEDPRTQCDNLTQILVSRLNSISSSIASLNEMGVVNGNGVGAAAVTGAAAVTGAAAVTGAAAVTGAAASHSYDATQSSIGLRKQSLPNYLDATKMLPESRHDIVMSAIYSFTGVQGKYLKKDVVTGRFKLDQQNIKFLTTGQAGMLLRLSELGYYHDRVVKFSDVSTGFNAIGSMGQALISKLKEELANFHGQVAMLHDEMQRFRQASVNGIANKGKKDSGPDAGDEMTLFKLLAWYIKPLHRMQWLTKIADACQVKKGGDLASTVYDFLDNGNDMVNKLVEDLLTAICGPLVRMISKWILEGGISDMHREFFVKSIKDVGVDRLWHDKFRLRLPMLPKFVPMDMANKILMTGKSINFLREICEEQGMMKERDELMKVMESSASQIFSYTPDTSWHAAVETCYQQTSKHVLDIMVGPHKLLDHLHGMRRYLLLGQGDFISILIENMKNELERPGLDIYANDLTSMLDSALRCTNAQYDDPDILNHLDVIVQRPFNGDIGWNIISLQYIVHGPLAAMLESTMPTYKVLFKPLWRMKHMEFVLSMKIWKEQMGNAKALRTMKSEIGKASHRLNLFTSEIMHFIHQMQYYVLFEVIECNWVELQKKMQKATTLDEILEAHEKFLQTILVGCFVSNKASVEHSLEVVYENIIELEKWQSSFYKDCFKELNARKELSKIVEKSEKKGVYGLTNKMILQRDQEAKIFAEKMDIACRGLEVIATDYEKAVSTFLMSLNSSDDPNLQLFGTRLDFNEYYKKRDTNLSKPLTFEHMRMSNVFAVNSRFVICTPSTQE.

Belongs to the TUBGCP family. In terms of assembly, gamma-tubulin small complex (Gamma TuSC) is a heterotetrameric complex which contains two molecules of gamma-tubulin, and one molecule each of Dgrip84 and Dgrip91. The gamma-tubulin in this complex binds preferentially to GDP over GTP.

It is found in the cytoplasm. Its subcellular location is the cytoskeleton. It localises to the microtubule organizing center. The protein resides in the centrosome. The protein localises to the perinuclear region. This chain is Gamma-tubulin complex component 3, found in Drosophila melanogaster (Fruit fly).